Consider the following 108-residue polypeptide: Circadian clock oscillator protein KaiB (108 aa).

The protein belongs to the KaiB family. May undergo a major conformational rearrangment; in the free state forms homooligomers. When bound to KaiC switches to a monomeric thioredoxin-fold (KaiB(fs)). The active oscillator complex is probably KaiC(6):KaiB(6).

In terms of biological role, component of the KaiBC clock protein complex, which constitutes the main circadian regulator in cyanobacteria; it may modify the ATPase activity of KaiC. May be a metamorphic protein which reversibly switches between an inactive tetrameric fold and a rare, thioredoxin-like monomeric fold (KaiB(fs)). KaiB(fs) binds phospho-KaiC, and perhaps clock output effectors. The polypeptide is Circadian clock oscillator protein KaiB (Prochlorococcus marinus (strain MIT 9515)).